A 737-amino-acid polypeptide reads, in one-letter code: ATP-dependent RNA helicase DDX50 (737 aa).

Residues 1–131 form a disordered region; it reads MPGKLLWGDI…SDNKLEETLT (131 aa). The segment covering 11 to 20 has biased composition (acidic residues); sequence MELEAPLEES. Basic and acidic residues-rich tracts occupy residues 38–51, 67–87, and 117–131; these read HYDSDEKSETRENG, KEKLNGDTEEGFNRLSDEFSK, and STHKSSDNKLEETLT. S41, S82, S86, S121, and S122 each carry phosphoserine. K125 participates in a covalent cross-link: Glycyl lysine isopeptide (Lys-Gly) (interchain with G-Cter in SUMO2). Positions 137–165 match the Q motif motif; it reads GAFSNFPISEETIKLLKGRGVTYLFPIQV. The 180-residue stretch at 168-347 folds into the Helicase ATP-binding domain; sequence FGPVYEGKDL…KKYMKSRYEQ (180 aa). 181–188 provides a ligand contact to ATP; that stretch reads ARTGTGKT. T247 bears the Phosphothreonine mark. Positions 290–293 match the DEVD box motif; that stretch reads DEVD. One can recognise a Helicase C-terminal domain in the interval 380–524; the sequence is DVLQVYSGSE…GVPSTMDLVK (145 aa). Position 518 is a phosphoserine (S518). A disordered region spans residues 668 to 737; the sequence is YDGNTSSNSR…RSGGHKRSFD (70 aa). Residues 673 to 687 show a composition bias toward low complexity; sequence SSNSRQRSGWSSGRS. The segment covering 691-701 has biased composition (gly residues); the sequence is GRSGGRSGGRS. Over residues 702–712 the composition is skewed to low complexity; it reads GRQSRQGSRSG. Over residues 720–737 the composition is skewed to basic residues; it reads RSGNRNRSRSGGHKRSFD.

This sequence belongs to the DEAD box helicase family. DDX21/DDX50 subfamily. As to quaternary structure, interacts with C1QBP. Interacts with the ubiquitin ligase CTLH complex through GID4. Interacts with TICAM1. As to expression, highest expression in skeletal muscle, liver, heart, placenta, and kidney.

Its subcellular location is the nucleus. It is found in the nucleolus. It localises to the cytoplasm. It carries out the reaction ATP + H2O = ADP + phosphate + H(+). ATP-dependent RNA helicase that may play a role in various aspects of RNA metabolism including pre-mRNA splicing or ribosomal RNA production. Also acts as a viral restriction factor and promotes the activation of the NF-kappa-B and IRF3 signaling pathways following its stimulation with viral RNA or infection with RNA and DNA viruses. For instance, decreases vaccinia virus, herpes simplex virus, Zika virus or dengue virus replication during the early stage of infection. Mechanistically, acts via the adapter TICAM1 and independently of the DDX1-DDX21-DHX36 helicase complex to induce the production of interferon-beta. The protein is ATP-dependent RNA helicase DDX50 (DDX50) of Homo sapiens (Human).